We begin with the raw amino-acid sequence, 67 residues long: uncharacterized protein (67 aa).

Residues 4 to 24 form a helical membrane-spanning segment; it reads WIFAILMLGVAIVLSIIATFF.

The protein resides in the membrane. This is an uncharacterized protein from Bacillus anthracis.